We begin with the raw amino-acid sequence, 156 residues long: SsrA-binding protein (156 aa).

Belongs to the SmpB family.

It is found in the cytoplasm. In terms of biological role, required for rescue of stalled ribosomes mediated by trans-translation. Binds to transfer-messenger RNA (tmRNA), required for stable association of tmRNA with ribosomes. tmRNA and SmpB together mimic tRNA shape, replacing the anticodon stem-loop with SmpB. tmRNA is encoded by the ssrA gene; the 2 termini fold to resemble tRNA(Ala) and it encodes a 'tag peptide', a short internal open reading frame. During trans-translation Ala-aminoacylated tmRNA acts like a tRNA, entering the A-site of stalled ribosomes, displacing the stalled mRNA. The ribosome then switches to translate the ORF on the tmRNA; the nascent peptide is terminated with the 'tag peptide' encoded by the tmRNA and targeted for degradation. The ribosome is freed to recommence translation, which seems to be the essential function of trans-translation. The chain is SsrA-binding protein from Staphylococcus carnosus (strain TM300).